The sequence spans 361 residues: Riboflavin biosynthesis protein RibD (361 aa).

One can recognise a CMP/dCMP-type deaminase domain in the interval 1-122; sequence MEEYYMKLAL…MMKEAGIEVR (122 aa). Residues 1 to 144 are deaminase; sequence MEEYYMKLAL…EKFLHFMRTG (144 aa). A Zn(2+)-binding site is contributed by His-49. Residue Glu-51 is the Proton donor of the active site. Zn(2+)-binding residues include Cys-74 and Cys-83. The reductase stretch occupies residues 145 to 361; it reads LPYVTLKAAA…IKLTAKPTKE (217 aa). Position 153 (Ala-153) interacts with NADP(+). Ser-167 contacts substrate. Trp-169 is an NADP(+) binding site. Arg-183 contacts substrate. Residues Thr-195 and Asp-199 each coordinate NADP(+). Residues Leu-203 and Arg-206 each contribute to the substrate site. Thr-221 serves as a coordination point for NADP(+). Glu-290 lines the substrate pocket. 292–298 serves as a coordination point for NADP(+); the sequence is GSAVHGS.

It in the N-terminal section; belongs to the cytidine and deoxycytidylate deaminase family. In the C-terminal section; belongs to the HTP reductase family. Homotetramer. Zn(2+) is required as a cofactor.

The catalysed reaction is 2,5-diamino-6-hydroxy-4-(5-phosphoribosylamino)-pyrimidine + H2O + H(+) = 5-amino-6-(5-phospho-D-ribosylamino)uracil + NH4(+). It carries out the reaction 5-amino-6-(5-phospho-D-ribitylamino)uracil + NADP(+) = 5-amino-6-(5-phospho-D-ribosylamino)uracil + NADPH + H(+). The protein operates within cofactor biosynthesis; riboflavin biosynthesis; 5-amino-6-(D-ribitylamino)uracil from GTP: step 2/4. It participates in cofactor biosynthesis; riboflavin biosynthesis; 5-amino-6-(D-ribitylamino)uracil from GTP: step 3/4. Converts 2,5-diamino-6-(ribosylamino)-4(3h)-pyrimidinone 5'-phosphate into 5-amino-6-(ribosylamino)-2,4(1h,3h)-pyrimidinedione 5'-phosphate. The protein is Riboflavin biosynthesis protein RibD (ribD) of Bacillus subtilis (strain 168).